We begin with the raw amino-acid sequence, 220 residues long: Membrane steroid-binding protein 1 (220 aa).

Residues 22–42 (VVFFTALALAFAIYQVISGWF) form a helical membrane-spanning segment. The 98-residue stretch at 74–171 (EITEEELKQY…SKYAKVGTVK (98 aa)) folds into the Cytochrome b5 heme-binding domain. A steroid-binding region spans residues 74-171 (EITEEELKQY…SKYAKVGTVK (98 aa)). Positions 174 to 220 (GSEPETASVSEPTENVEQDAHVTTTPGKTVVDKSDDAPAETVLKKEE) are disordered. The segment covering 178–200 (ETASVSEPTENVEQDAHVTTTPG) has biased composition (polar residues). Residues 203 to 220 (VVDKSDDAPAETVLKKEE) are compositionally biased toward basic and acidic residues.

This sequence belongs to the cytochrome b5 family. MAPR subfamily. In terms of assembly, interacts with BAK1 (via extracellular region). In terms of tissue distribution, expressed in cotyledons, stems, roots, leaves, flower and silique stalks, pistils and stigmas, but not in anthers.

It is found in the cell membrane. It localises to the endosome membrane. Functionally, MSBP1 can bind to multiple steroid compounds with different affinities. Negatively regulates cell elongation and brassinosteroid signaling. May act as a coreceptor with BAK1 and enhances its endocytosis. This Arabidopsis thaliana (Mouse-ear cress) protein is Membrane steroid-binding protein 1 (MSBP1).